We begin with the raw amino-acid sequence, 444 residues long: MKFLMQSISGRNRSLVRALVSRRYFASSPEEIAKRNYANDLSEYNTAVNSVTAQRRHYLLRDVYDDMKLDGVQPTADIFHSFVVGTMKGARLSDAFFFREEMKAMGIAPDVNLYNFLISTCGKCKNGKEAIRVYDEMKRYDVKPNGQTFVCLLNACAVSGQLDLVYAIVRDMTAAGVGLNQFCYAGLITAHLNKQPRPDNLSTKILEFVEQSKGWSAIDSSRKSAEDVMFSISEEELYNIPTADYSHRTRFLQRNLTVYHVAFSALADLKDVKATEALLEMLKKDGKDTDTYCMLQIMRCYLHSQDFENGLKLFQDYMSADKIPAMELYTTLIEGAMTGYTDNGMKIAQDTLIQMNERNFFLDPRTGSNLLLKAAGEKTGGYTVANMIWDLMLARNILPTLAAVEAYYKGLKEREIPEDDPRLMLVTRTYNNLRLREGTLPNRR.

Residues 1 to 25 constitute a mitochondrion transit peptide; it reads MKFLMQSISGRNRSLVRALVSRRYF. 6 PPR repeats span residues 40–74, 75–109, 110–144, 145–179, 255–289, and 290–325; these read DLSE…GVQP, TADI…GIAP, DVNL…DVKP, NGQT…GVGL, NLTV…GKDT, and DTYC…KIPA.

Belongs to the PPR family. P subfamily.

The protein resides in the mitochondrion. This chain is Pentatricopeptide repeat-containing protein At4g35850, mitochondrial, found in Arabidopsis thaliana (Mouse-ear cress).